The sequence spans 327 residues: Elongation factor P--(R)-beta-lysine ligase (327 aa).

78-80 (SPE) contributes to the substrate binding site. Residues 102–104 (RNQ) and N111 contribute to the ATP site. Y120 serves as a coordination point for substrate. Residue 246 to 247 (EL) coordinates ATP. E253 is a binding site for substrate. G302 lines the ATP pocket.

Belongs to the class-II aminoacyl-tRNA synthetase family. EpmA subfamily. Homodimer.

It catalyses the reaction D-beta-lysine + L-lysyl-[protein] + ATP = N(6)-((3R)-3,6-diaminohexanoyl)-L-lysyl-[protein] + AMP + diphosphate + H(+). In terms of biological role, with EpmB is involved in the beta-lysylation step of the post-translational modification of translation elongation factor P (EF-P). Catalyzes the ATP-dependent activation of (R)-beta-lysine produced by EpmB, forming a lysyl-adenylate, from which the beta-lysyl moiety is then transferred to the epsilon-amino group of a conserved specific lysine residue in EF-P. This chain is Elongation factor P--(R)-beta-lysine ligase, found in Baumannia cicadellinicola subsp. Homalodisca coagulata.